The sequence spans 97 residues: Secreted transmembrane peptide 4 (97 aa).

An N-terminal signal peptide occupies residues 1-33; that stretch reads MTKNMTKKKMGLMSPNIAAFVLPMLLVLFTISS. The short motif at 54–67 is the SCOOP motif element; that stretch reads IVFTPPSSSCGGSP. A SxS motif essential for MIK2 binding motif is present at residues 60 to 62; it reads SSS. The interval 75–97 is disordered; the sequence is WMPRRPCRRTRPPGTNIPVSQSP.

It belongs to the serine rich endogenous peptide (SCOOP) phytocytokine family. In terms of assembly, interacts with MIK2 (via extracellular leucine-rich repeat domain); this interaction triggers the formation of complex between MIK2 and the BAK1/SERK3 and SERK4 coreceptors, and subsequent BAK1 activation by phosphorylation. As to expression, mostly expressed in leaves and stems, and, to a lower extent, in roots, siliques, seeds and flowers.

It localises to the cell membrane. The protein localises to the secreted. Its subcellular location is the extracellular space. It is found in the apoplast. Brassicaceae-specific phytocytokine (plant endogenous peptide released into the apoplast) perceived by MIK2 in a BAK1/SERK3 and SERK4 coreceptors-dependent manner, that modulates various physiological and antimicrobial processes including growth prevention and reactive oxygen species (ROS) response regulation. Prevents general growth and development. The polypeptide is Secreted transmembrane peptide 4 (Arabidopsis thaliana (Mouse-ear cress)).